The primary structure comprises 186 residues: Large ribosomal subunit protein uL10 (186 aa).

Part of the ribosomal stalk of the 50S ribosomal subunit. The N-terminus interacts with L11 and the large rRNA to form the base of the stalk. The C-terminus forms an elongated spine to which L12 dimers bind in a sequential fashion forming a multimeric L10(L12)X complex.

Functionally, forms part of the ribosomal stalk, playing a central role in the interaction of the ribosome with GTP-bound translation factors. The chain is Large ribosomal subunit protein uL10 from Rhodopseudomonas palustris (strain ATCC BAA-98 / CGA009).